The primary structure comprises 134 residues: Ribonuclease P protein component 2 (134 aa).

It belongs to the eukaryotic/archaeal RNase P protein component 2 family. In terms of assembly, consists of a catalytic RNA component and at least 4-5 protein subunits. Forms a subcomplex with Rnp3 which stimulates the catalytic RNA.

The protein localises to the cytoplasm. It catalyses the reaction Endonucleolytic cleavage of RNA, removing 5'-extranucleotides from tRNA precursor.. Its function is as follows. Part of ribonuclease P, a protein complex that generates mature tRNA molecules by cleaving their 5'-ends. In Methanocaldococcus jannaschii (strain ATCC 43067 / DSM 2661 / JAL-1 / JCM 10045 / NBRC 100440) (Methanococcus jannaschii), this protein is Ribonuclease P protein component 2.